Reading from the N-terminus, the 632-residue chain is 1-deoxy-D-xylulose-5-phosphate synthase (632 aa).

Residues His-77 and 118–120 (GHS) each bind thiamine diphosphate. Asp-149 contributes to the Mg(2+) binding site. Residues 150 to 151 (GA), Asn-178, Tyr-289, and Glu-372 contribute to the thiamine diphosphate site. Mg(2+) is bound at residue Asn-178.

Belongs to the transketolase family. DXPS subfamily. As to quaternary structure, homodimer. Mg(2+) is required as a cofactor. Requires thiamine diphosphate as cofactor.

It catalyses the reaction D-glyceraldehyde 3-phosphate + pyruvate + H(+) = 1-deoxy-D-xylulose 5-phosphate + CO2. It participates in metabolic intermediate biosynthesis; 1-deoxy-D-xylulose 5-phosphate biosynthesis; 1-deoxy-D-xylulose 5-phosphate from D-glyceraldehyde 3-phosphate and pyruvate: step 1/1. Functionally, catalyzes the acyloin condensation reaction between C atoms 2 and 3 of pyruvate and glyceraldehyde 3-phosphate to yield 1-deoxy-D-xylulose-5-phosphate (DXP). The polypeptide is 1-deoxy-D-xylulose-5-phosphate synthase (Listeria innocua serovar 6a (strain ATCC BAA-680 / CLIP 11262)).